The chain runs to 282 residues: Bifunctional protein FolD (282 aa).

NADP(+)-binding positions include 162 to 164 (GRS), S187, and V228.

The protein belongs to the tetrahydrofolate dehydrogenase/cyclohydrolase family. Homodimer.

The enzyme catalyses (6R)-5,10-methylene-5,6,7,8-tetrahydrofolate + NADP(+) = (6R)-5,10-methenyltetrahydrofolate + NADPH. The catalysed reaction is (6R)-5,10-methenyltetrahydrofolate + H2O = (6R)-10-formyltetrahydrofolate + H(+). It participates in one-carbon metabolism; tetrahydrofolate interconversion. Its function is as follows. Catalyzes the oxidation of 5,10-methylenetetrahydrofolate to 5,10-methenyltetrahydrofolate and then the hydrolysis of 5,10-methenyltetrahydrofolate to 10-formyltetrahydrofolate. The sequence is that of Bifunctional protein FolD from Thermus thermophilus (strain ATCC BAA-163 / DSM 7039 / HB27).